The primary structure comprises 269 residues: UPF0162 protein YchA (269 aa).

The protein belongs to the UPF0162 family.

This Escherichia coli O157:H7 protein is UPF0162 protein YchA (ychA).